Reading from the N-terminus, the 579-residue chain is MKKKAEWPRKLRSQEWYGGTSRDVIYHRGWLKNQGYPHDLFDGRPVIGILNTWSDMTPCNGHLRELAEKVKAGVWEAGGFPLEVPVFSASENTFRPTAMMYRNLAALAVEEAIRGQPMDGCVLLVGCDKTTPSLLMGAASCDLPSIVVTGGPMLNGYFRGERVGSGTHLWKFSEMVKAGEMTQAEFLEAEASMSRSSGTCNTMGTASTMASMAEALGMALSGNAAIPGVDSRRKVMAQLTGRRIVQMVKDDLKPSEIMTKQAFENAIRTNAAIGGSTNAVIHLLAIAGRVGIDLSLDDWDRCGRDVPTIVNLMPSGKYLMEEFFYAGGLPVVLKRLGEAGLLHKDALTVSGETVWDEVKDVVNWNEDVILPAEKALTSSGGIVVLRGNLAPKGAVLKPSAASPHLLVHKGRAVVFEDIDDYKAKINDDNLDIDENCIMVMKNCGPKGYPGMAEVGNMGLPPKVLKKGILDMVRISDARMSGTAYGTVVLHTSPEAAVGGPLAVVKNGDMIELDVPNRRLHLDISDEELARRLAEWQPNHDLPTSGYAFLHQQHVEGADTGADLDFLKGCRGNAVGKDSH.

Position 59 (cysteine 59) interacts with [2Fe-2S] cluster. Mg(2+) is bound at residue glutamate 91. Cysteine 127 contacts [2Fe-2S] cluster. Aspartate 128 provides a ligand contact to Mg(2+). Cysteine 200 contributes to the [2Fe-2S] cluster binding site. Mg(2+) is bound at residue glutamate 453.

The protein belongs to the IlvD/Edd family. As to quaternary structure, homotetramer. Requires [2Fe-2S] cluster as cofactor. It depends on Mg(2+) as a cofactor.

It catalyses the reaction L-arabinonate = 2-dehydro-3-deoxy-L-arabinonate + H2O. The enzyme catalyses D-galactonate = 2-dehydro-3-deoxy-D-galactonate + H2O. It carries out the reaction D-fuconate = 2-dehydro-3-deoxy-D-fuconate + H2O. The protein operates within carbohydrate metabolism. In terms of biological role, catalyzes the dehydration of L-arabinonate to 2-dehydro-3-deoxy-L-arabinonate during L-arabinose degradation. Can also dehydrate D-galactonate and D-fuconate with good catalytic efficiency. Has weak activity with D-xylonate and D-gluconate. The chain is L-arabinonate dehydratase from Rhizobium leguminosarum bv. trifolii (strain WSM2304).